The following is a 564-amino-acid chain: Phenylalanine--tRNA ligase beta subunit (564 aa).

A B5 domain is found at 286–362 (YFQNSLKINV…IGKGLDNFKS (77 aa)). Residues Asp340, Asp346, Glu349, and Glu350 each contribute to the Mg(2+) site.

It belongs to the phenylalanyl-tRNA synthetase beta subunit family. Type 2 subfamily. Tetramer of two alpha and two beta subunits. Requires Mg(2+) as cofactor.

It localises to the cytoplasm. It catalyses the reaction tRNA(Phe) + L-phenylalanine + ATP = L-phenylalanyl-tRNA(Phe) + AMP + diphosphate + H(+). This Borrelia duttonii (strain Ly) protein is Phenylalanine--tRNA ligase beta subunit.